Consider the following 378-residue polypeptide: UDP-N-acetylglucosamine--N-acetylmuramyl-(pentapeptide) pyrophosphoryl-undecaprenol N-acetylglucosamine transferase (378 aa).

UDP-N-acetyl-alpha-D-glucosamine-binding positions include 14–16 (TGG), Asn-125, Arg-165, Ser-193, and Gln-293.

The protein belongs to the glycosyltransferase 28 family. MurG subfamily.

Its subcellular location is the cell inner membrane. The enzyme catalyses di-trans,octa-cis-undecaprenyl diphospho-N-acetyl-alpha-D-muramoyl-L-alanyl-D-glutamyl-meso-2,6-diaminopimeloyl-D-alanyl-D-alanine + UDP-N-acetyl-alpha-D-glucosamine = di-trans,octa-cis-undecaprenyl diphospho-[N-acetyl-alpha-D-glucosaminyl-(1-&gt;4)]-N-acetyl-alpha-D-muramoyl-L-alanyl-D-glutamyl-meso-2,6-diaminopimeloyl-D-alanyl-D-alanine + UDP + H(+). The protein operates within cell wall biogenesis; peptidoglycan biosynthesis. Cell wall formation. Catalyzes the transfer of a GlcNAc subunit on undecaprenyl-pyrophosphoryl-MurNAc-pentapeptide (lipid intermediate I) to form undecaprenyl-pyrophosphoryl-MurNAc-(pentapeptide)GlcNAc (lipid intermediate II). This is UDP-N-acetylglucosamine--N-acetylmuramyl-(pentapeptide) pyrophosphoryl-undecaprenol N-acetylglucosamine transferase from Bartonella henselae (strain ATCC 49882 / DSM 28221 / CCUG 30454 / Houston 1) (Rochalimaea henselae).